A 104-amino-acid chain; its full sequence is Large ribosomal subunit protein bL21 (104 aa).

The protein belongs to the bacterial ribosomal protein bL21 family. In terms of assembly, part of the 50S ribosomal subunit. Contacts protein L20.

Its function is as follows. This protein binds to 23S rRNA in the presence of protein L20. This Helicobacter pylori (strain HPAG1) protein is Large ribosomal subunit protein bL21.